Here is a 561-residue protein sequence, read N- to C-terminus: DNA ligase B (561 aa).

K125 functions as the N6-AMP-lysine intermediate in the catalytic mechanism.

The protein belongs to the NAD-dependent DNA ligase family. LigB subfamily.

The enzyme catalyses NAD(+) + (deoxyribonucleotide)n-3'-hydroxyl + 5'-phospho-(deoxyribonucleotide)m = (deoxyribonucleotide)n+m + AMP + beta-nicotinamide D-nucleotide.. Its function is as follows. Catalyzes the formation of phosphodiester linkages between 5'-phosphoryl and 3'-hydroxyl groups in double-stranded DNA using NAD as a coenzyme and as the energy source for the reaction. This Escherichia coli O127:H6 (strain E2348/69 / EPEC) protein is DNA ligase B.